A 155-amino-acid polypeptide reads, in one-letter code: Ribosomal RNA large subunit methyltransferase H (155 aa).

Residues Leu-72, Gly-103, and 122–127 (LSPLTF) contribute to the S-adenosyl-L-methionine site.

This sequence belongs to the RNA methyltransferase RlmH family. As to quaternary structure, homodimer.

Its subcellular location is the cytoplasm. The catalysed reaction is pseudouridine(1915) in 23S rRNA + S-adenosyl-L-methionine = N(3)-methylpseudouridine(1915) in 23S rRNA + S-adenosyl-L-homocysteine + H(+). In terms of biological role, specifically methylates the pseudouridine at position 1915 (m3Psi1915) in 23S rRNA. The chain is Ribosomal RNA large subunit methyltransferase H from Alkalilimnicola ehrlichii (strain ATCC BAA-1101 / DSM 17681 / MLHE-1).